Consider the following 372-residue polypeptide: Envelope phospholipase OPG057 (372 aa).

The YPPL motif lies at tyrosine 153–leucine 156. S-palmitoyl cysteine; by host attachment occurs at residues cysteine 185 and cysteine 186. In terms of domain architecture, PLD phosphodiesterase spans phenylalanine 307–histidine 334.

This sequence belongs to the orthopoxvirus OPG057 family. In terms of assembly, interacts with protein OPG190. Palmitoylated. Attachment of the palmitate moiety is essential for correct intracellular targeting and protein function.

The protein localises to the virion membrane. Its subcellular location is the host Golgi apparatus. It localises to the host trans-Golgi network. It is found in the host endoplasmic reticulum membrane. The enzyme catalyses a 1,2-diacyl-sn-glycero-3-phosphocholine + H2O = a 1,2-diacyl-sn-glycero-3-phosphate + choline + H(+). In terms of biological role, major envelope protein that plays a role in the biogenesis of the viral double membrane and in egress of virus from the host cell. Produces the wrapped form of virus that is required for cell-to-cell spread. Acts as a lipase with broad specificity including phospholipase C, phospholipase A, and triacylglycerol lipase activities. This is Envelope phospholipase OPG057 (OPG057) from Cynomys gunnisoni (Gunnison's prairie dog).